A 106-amino-acid polypeptide reads, in one-letter code: MALDPAEQHLRHVEKDVLIPKIIREKARERCSEQVEDFTRCCKDSGILMVLKCRKENSALKDCLTAYYNDPAFYEECKLEYLKEREEFRKTGVPTKKRLQKLPTNM.

At alanine 2 the chain carries N-acetylalanine. The region spanning arginine 28–proline 71 is the CHCH domain. 2 consecutive short sequence motifs (cx9C motif) follow at residues cysteine 31–cysteine 41 and cysteine 53–cysteine 63. 2 disulfide bridges follow: cysteine 31–cysteine 63 and cysteine 41–cysteine 53.

Belongs to the CMC family. In terms of assembly, component of the MITRAC (mitochondrial translation regulation assembly intermediate of cytochrome c oxidase complex) complex, the core components of this complex being COA3/MITRAC12 and COX14.

Its subcellular location is the mitochondrion. Its function is as follows. Component of the MITRAC (mitochondrial translation regulation assembly intermediate of cytochrome c oxidase complex) complex, that regulates cytochrome c oxidase assembly. The chain is COX assembly mitochondrial protein homolog (Cmc1) from Mus musculus (Mouse).